A 482-amino-acid chain; its full sequence is tRNA sulfurtransferase (482 aa).

The THUMP domain maps to 61–165 (LAIRDALTRI…DDRLLLIKGR (105 aa)). ATP is bound by residues 183 to 184 (LI), Lys-265, Gly-287, and Gln-296. A disulfide bridge connects residues Cys-344 and Cys-456. In terms of domain architecture, Rhodanese spans 404–482 (FGANDVILDI…GFANVKVYRP (79 aa)). Cys-456 acts as the Cysteine persulfide intermediate in catalysis.

Belongs to the ThiI family.

It localises to the cytoplasm. It carries out the reaction [ThiI sulfur-carrier protein]-S-sulfanyl-L-cysteine + a uridine in tRNA + 2 reduced [2Fe-2S]-[ferredoxin] + ATP + H(+) = [ThiI sulfur-carrier protein]-L-cysteine + a 4-thiouridine in tRNA + 2 oxidized [2Fe-2S]-[ferredoxin] + AMP + diphosphate. The enzyme catalyses [ThiS sulfur-carrier protein]-C-terminal Gly-Gly-AMP + S-sulfanyl-L-cysteinyl-[cysteine desulfurase] + AH2 = [ThiS sulfur-carrier protein]-C-terminal-Gly-aminoethanethioate + L-cysteinyl-[cysteine desulfurase] + A + AMP + 2 H(+). The protein operates within cofactor biosynthesis; thiamine diphosphate biosynthesis. Functionally, catalyzes the ATP-dependent transfer of a sulfur to tRNA to produce 4-thiouridine in position 8 of tRNAs, which functions as a near-UV photosensor. Also catalyzes the transfer of sulfur to the sulfur carrier protein ThiS, forming ThiS-thiocarboxylate. This is a step in the synthesis of thiazole, in the thiamine biosynthesis pathway. The sulfur is donated as persulfide by IscS. In Salmonella arizonae (strain ATCC BAA-731 / CDC346-86 / RSK2980), this protein is tRNA sulfurtransferase.